Consider the following 286-residue polypeptide: ADLGYGPATPAAPAAGYTPATPAAPAGADAAGKATTEEQKLIEKINAGFKAALAGAGVQPADKYRTFVATFGPASNKAFAEGLSGEPKGAAESSSKAALTSKLDAAYKLAYKTAEGATPEAKYDAYVATLSEALRIIAGTLEVHAVKPAAEEVKVIPAGELQVIEKVDAAFKVAATAANAAPANDKFTVFEAAFNDEIKASTGGAYESYKFIPALEAAVKQAYAATVATAPEVKYTVFETALKKAITAMSEAQKAAKPAAAATATATAAVGAATGAATAATGGYKV.

Residues 1–34 (ADLGYGPATPAAPAAGYTPATPAAPAGADAAGKA) are compositionally biased toward low complexity. The tract at residues 1 to 35 (ADLGYGPATPAAPAAGYTPATPAAPAGADAAGKAT) is disordered.

The protein belongs to the Poa p IX/Phl p VI allergen family.

It localises to the secreted. This chain is Pollen allergen Phl p 5a, found in Phleum pratense (Common timothy).